A 342-amino-acid chain; its full sequence is Ribosomal RNA small subunit methyltransferase C (342 aa).

It belongs to the methyltransferase superfamily. RsmC family. In terms of assembly, monomer.

Its subcellular location is the cytoplasm. It catalyses the reaction guanosine(1207) in 16S rRNA + S-adenosyl-L-methionine = N(2)-methylguanosine(1207) in 16S rRNA + S-adenosyl-L-homocysteine + H(+). Functionally, specifically methylates the guanine in position 1207 of 16S rRNA in the 30S particle. This Salmonella enteritidis PT4 (strain P125109) protein is Ribosomal RNA small subunit methyltransferase C.